A 360-amino-acid polypeptide reads, in one-letter code: Ankyrin repeat domain-containing protein 2 (360 aa).

Residues 5–120 (PSWAGVGALA…GIQNLIELRK (116 aa)) are may mediate interaction with PML, p53/TP53 and YBX1. Serine 99 carries the post-translational modification Phosphoserine; by PKB/AKT2. Residues 126–147 (KRDALAASHEPPPEPEEITGPV) form a disordered region. The segment covering 138–147 (PEPEEITGPV) has biased composition (acidic residues). 5 ANK repeats span residues 147–176 (VDEE…SADT), 180–209 (FRRT…TVDF), 213–242 (LDCT…DTNV), 246–275 (LLST…EINA), and 279–308 (EGDT…DMMT). Residues 330–342 (ALEHPEPGAEHNG) show a composition bias toward basic and acidic residues. The segment at 330–360 (ALEHPEPGAEHNGLEGPNDSGRETPQPVPAQ) is disordered.

In terms of assembly, interacts with ID3; both proteins cooperate in myoblast differentiation. Interacts with TTN/titin. Interacts (via ANK repeats) with TCAP; the interaction is direct. Interacts with TJP1 (via PDZ domains). Interacts with PML; the interaction is direct. Interacts with p53/TP53. Interacts with YBX1. Interacts with AKT2. Post-translationally, phosphorylation at Ser-99 by PKB/AKT2 in response to oxidative stress induces translocation to the nucleus and negatively regulates myoblast differentiation. Mostly expressed in skeletal and cardiac muscles. Found in slow fibers. Also expressed in kidney, but to a lower extent (at protein level).

It localises to the cytoplasm. Its subcellular location is the myofibril. The protein resides in the sarcomere. It is found in the i band. The protein localises to the cytosol. It localises to the nucleus. Its subcellular location is the PML body. In terms of biological role, functions as a negative regulator of myocyte differentiation. May interact with both sarcoplasmic structural proteins and nuclear proteins to regulate gene expression during muscle development and in response to muscle stress. This Homo sapiens (Human) protein is Ankyrin repeat domain-containing protein 2 (ANKRD2).